The following is a 279-amino-acid chain: uncharacterized protein (279 aa).

Disordered stretches follow at residues 50–109 (YTYN…YNKN) and 249–279 (SQSQ…SPKL). Positions 68 to 109 (NNNSNYNNNNNNNNNNNNNNNNNNNNNNNKNNNNNNYNYNKN) are enriched in low complexity.

This is an uncharacterized protein from Dictyostelium discoideum (Social amoeba).